Consider the following 438-residue polypeptide: Glutaryl-CoA dehydrogenase, mitochondrial (438 aa).

A mitochondrion-targeting transit peptide spans 1 to 44 (MALRGVSVRLLSRGPGLHVLRTWVSSAAQTEKGGRTQSQLAKSS). Substrate contacts are provided by residues 138–139 (RS) and serine 186. Residues 177–186 (FGLTEPNSGS) and 212–214 (WIT) contribute to the FAD site. Position 240 is an N6-acetyllysine (lysine 240). 287 to 294 (FGCLNNAR) lines the substrate pocket. Residues arginine 319, glutamine 330, and 387 to 391 (DMLGG) each bind FAD. The active-site Proton acceptor is glutamate 414. Glycine 415 contributes to the substrate binding site. FAD is bound by residues 416-418 (THD) and phenylalanine 434.

The protein belongs to the acyl-CoA dehydrogenase family. In terms of assembly, homotetramer. It depends on FAD as a cofactor. In terms of tissue distribution, isoform Long and isoform Short are expressed in fibroblasts and liver.

It is found in the mitochondrion matrix. The catalysed reaction is glutaryl-CoA + oxidized [electron-transfer flavoprotein] + 2 H(+) = (2E)-butenoyl-CoA + reduced [electron-transfer flavoprotein] + CO2. The protein operates within amino-acid metabolism; lysine degradation. Its pathway is amino-acid metabolism; tryptophan metabolism. With respect to regulation, strongly inhibited by MCPA-CoA, a metabolite of hypoglycin which is present in unripened fruit of the ackee tree. In terms of biological role, catalyzes the oxidative decarboxylation of glutaryl-CoA to crotonyl-CoA and CO(2) in the degradative pathway of L-lysine, L-hydroxylysine, and L-tryptophan metabolism. It uses electron transfer flavoprotein as its electron acceptor. Isoform Short is inactive. In Homo sapiens (Human), this protein is Glutaryl-CoA dehydrogenase, mitochondrial (GCDH).